Here is a 257-residue protein sequence, read N- to C-terminus: Undecaprenyl-diphosphatase (257 aa).

Helical transmembrane passes span 4 to 24 (LIRV…PISS), 41 to 61 (SVTL…VVFW), 74 to 94 (VIGL…TIKT), 103 to 123 (PLLA…LGRL), 133 to 153 (LGLG…LPGI), 173 to 193 (SVTF…VLAI), 209 to 229 (VLSI…KWLI), and 236 to 256 (RLHW…LLNL).

The protein belongs to the UppP family.

The protein resides in the cell inner membrane. The catalysed reaction is di-trans,octa-cis-undecaprenyl diphosphate + H2O = di-trans,octa-cis-undecaprenyl phosphate + phosphate + H(+). In terms of biological role, catalyzes the dephosphorylation of undecaprenyl diphosphate (UPP). Confers resistance to bacitracin. The polypeptide is Undecaprenyl-diphosphatase (Rhodopirellula baltica (strain DSM 10527 / NCIMB 13988 / SH1)).